The sequence spans 267 residues: Protein COFACTOR ASSEMBLY OF COMPLEX C SUBUNIT B CCB1, chloroplastic (267 aa).

The transit peptide at 1–44 (MATKLISPPLSCPWVTSREVIIKGLPRRRREWMVTKRNRVSAVT) directs the protein to the chloroplast. The Lumenal portion of the chain corresponds to 45-84 (AMIVEPLSVVSSSAIQIHQWWEQNPNSLLLMTEATGGYSL). A helical transmembrane segment spans residues 85–105 (ASYYTSLGLFVISVPGLWSLI). The Stromal portion of the chain corresponds to 106–164 (KRSVKSKIVRKTFVVNDVKKEPKQVAGEILSFFTRKNFNITDRGETITFEGKMVPSRGQ). Residues 165–185 (AALLTFCTCISLASVGLVLTI) traverse the membrane as a helical segment. Thr186 is a topological domain (lumenal). The helical transmembrane segment at 187-207 (VPDFGNNWFFIILLSPLAGVY) threads the bilayer. Residues 208-267 (YWKKASRKEEIKVKMMVGSKGRLDEIVVQGDDVQVEEMRKELQLNEKGMVYVKGLFERSS) lie on the Stromal side of the membrane.

It localises to the plastid. It is found in the chloroplast thylakoid membrane. Functionally, required for the biogenesis and accumulation of native cytochrome b6 in the thylakoid membrane. Controls the conversion of apocytochrome b6 to holocytochrome b6. Required for covalent binding of the c-type heme to cytochrome b6. The polypeptide is Protein COFACTOR ASSEMBLY OF COMPLEX C SUBUNIT B CCB1, chloroplastic (Arabidopsis thaliana (Mouse-ear cress)).